Consider the following 467-residue polypeptide: uncharacterized protein (467 aa).

The interval 416–467 is disordered; the sequence is KQQRAQTAVVGTTKELVSKATHMKPPRTPPGEAEHRKRSQSLAICQWNKNSR. Over residues 455–467 the composition is skewed to polar residues; the sequence is QSLAICQWNKNSR.

This is an uncharacterized protein from Homo sapiens (Human).